A 339-amino-acid polypeptide reads, in one-letter code: Anthranilate phosphoribosyltransferase (339 aa).

5-phospho-alpha-D-ribose 1-diphosphate-binding positions include Gly79, 82 to 83 (GD), Ser87, 89 to 92 (NIST), 107 to 115 (KHGNRSISS), and Ser119. An anthranilate-binding site is contributed by Gly79. Ser91 serves as a coordination point for Mg(2+). An anthranilate-binding site is contributed by Asn110. Arg165 contributes to the anthranilate binding site. Mg(2+) contacts are provided by Asp224 and Glu225.

The protein belongs to the anthranilate phosphoribosyltransferase family. In terms of assembly, homodimer. It depends on Mg(2+) as a cofactor.

It catalyses the reaction N-(5-phospho-beta-D-ribosyl)anthranilate + diphosphate = 5-phospho-alpha-D-ribose 1-diphosphate + anthranilate. The protein operates within amino-acid biosynthesis; L-tryptophan biosynthesis; L-tryptophan from chorismate: step 2/5. Catalyzes the transfer of the phosphoribosyl group of 5-phosphorylribose-1-pyrophosphate (PRPP) to anthranilate to yield N-(5'-phosphoribosyl)-anthranilate (PRA). The polypeptide is Anthranilate phosphoribosyltransferase (Listeria monocytogenes serotype 4a (strain HCC23)).